A 1112-amino-acid polypeptide reads, in one-letter code: DNA polymerase II large subunit (1112 aa).

The protein belongs to the archaeal DNA polymerase II family. In terms of assembly, heterodimer of a large subunit and a small subunit.

The enzyme catalyses DNA(n) + a 2'-deoxyribonucleoside 5'-triphosphate = DNA(n+1) + diphosphate. It catalyses the reaction Exonucleolytic cleavage in the 3'- to 5'-direction to yield nucleoside 5'-phosphates.. Possesses two activities: a DNA synthesis (polymerase) and an exonucleolytic activity that degrades single-stranded DNA in the 3'- to 5'-direction. Has a template-primer preference which is characteristic of a replicative DNA polymerase. This is DNA polymerase II large subunit from Cenarchaeum symbiosum (strain A).